A 246-amino-acid polypeptide reads, in one-letter code: uncharacterized protein (246 aa).

This is an uncharacterized protein from Methanocaldococcus jannaschii (strain ATCC 43067 / DSM 2661 / JAL-1 / JCM 10045 / NBRC 100440) (Methanococcus jannaschii).